The sequence spans 157 residues: Transcription elongation factor GreA (157 aa).

The protein belongs to the GreA/GreB family.

Necessary for efficient RNA polymerase transcription elongation past template-encoded arresting sites. The arresting sites in DNA have the property of trapping a certain fraction of elongating RNA polymerases that pass through, resulting in locked ternary complexes. Cleavage of the nascent transcript by cleavage factors such as GreA or GreB allows the resumption of elongation from the new 3'terminus. GreA releases sequences of 2 to 3 nucleotides. The chain is Transcription elongation factor GreA from Phenylobacterium zucineum (strain HLK1).